A 476-amino-acid chain; its full sequence is H2.0-like homeobox protein (476 aa).

3 disordered regions span residues 121 to 170, 328 to 401, and 413 to 476; these read HLPQ…SSKD, WRHS…HQTT, and TASS…LAGL. The segment covering 158 to 168 has biased composition (low complexity); it reads HHSGSAPAPSS. A DNA-binding region (homeobox) is located at residues 273 to 332; that stretch reads RSWSRAVFSNLQRKGLEKRFEIQKYVTKPDRKQLAAMLGLTDAQVKVWFQNRRMKWRHSK. Basic and acidic residues-rich tracts occupy residues 331–346 and 355–368; these read SKEAQAQKDKDKEAGE and EGEREERSPSRSEG. Positions 369-379 are enriched in acidic residues; that stretch reads EAESESSDSES. The segment covering 386 to 397 has biased composition (basic and acidic residues); sequence DTERTEGTERSL. Residues 413 to 446 show a composition bias toward low complexity; that stretch reads TASSSASGSSFSFSSSSSLGSSNGSAGSASSLGS. The span at 455-464 shows a compositional bias: polar residues; that stretch reads HQPSVTSGPQ.

Belongs to the H2.0 homeobox family.

It is found in the nucleus. Its function is as follows. Transcription factor required for TBX21/T-bet-dependent maturation of Th1 cells as well as maintenance of Th1-specific gene expression. Involved in embryogenesis and hematopoiesis. The protein is H2.0-like homeobox protein (Hlx) of Rattus norvegicus (Rat).